A 217-amino-acid chain; its full sequence is MRLRHKPYAMDRIKEYSQFVIGNPEEHRGNWKELFGNDHPIHIEVGTGRGRFVYEMAKANPDINYIGIEKFTSVIVDALDKLIEKELPNLKLINKDAEDLTVFFTKGEIDRVYLNFSDPWPKKRHAKRRLTYKTFLRNYEEVLVKDGEIHFKTDNQALFEYSLMSMAEYGMVFTFLSLDLHNSDFEGNIMTEYEEKFSSKGHRIYRVEAKYRTEPVQ.

Residues Glu44, Glu69, Asp96, and Asp118 each coordinate S-adenosyl-L-methionine. Asp118 is an active-site residue. Substrate contacts are provided by residues Lys122, Asp154, and Thr191–Glu194.

The protein belongs to the class I-like SAM-binding methyltransferase superfamily. TrmB family.

It catalyses the reaction guanosine(46) in tRNA + S-adenosyl-L-methionine = N(7)-methylguanosine(46) in tRNA + S-adenosyl-L-homocysteine. Its pathway is tRNA modification; N(7)-methylguanine-tRNA biosynthesis. In terms of biological role, catalyzes the formation of N(7)-methylguanine at position 46 (m7G46) in tRNA. The polypeptide is tRNA (guanine-N(7)-)-methyltransferase (Bacillus cytotoxicus (strain DSM 22905 / CIP 110041 / 391-98 / NVH 391-98)).